A 169-amino-acid chain; its full sequence is Cytochrome c oxidase subunit 4 isoform 1, mitochondrial (169 aa).

The N-terminal 22 residues, 1–22, are a transit peptide targeting the mitochondrion; it reads MLATRVFSLVGKRAISTSVCVR. Topologically, residues 23 to 98 are mitochondrial matrix; the sequence is AHESVVKSED…SFAEMNRGSN (76 aa). K29 carries the post-translational modification N6-acetyllysine; alternate. K29 carries the post-translational modification N6-succinyllysine; alternate. Residue K53 is modified to N6-acetyllysine. Phosphoserine occurs at positions 56 and 58. K60 carries the N6-acetyllysine; alternate modification. Position 60 is an N6-succinyllysine; alternate (K60). K67 is modified (N6-acetyllysine). A helical membrane pass occupies residues 99–124; it reads EWKTVVGGAMFFIGFTALVIMWQKHY. Topologically, residues 125-169 are mitochondrial intermembrane; the sequence is VYGPLPQSFDKEWVAKQTKRMLDMKVNPIQGLASKWDYEKNEWKK.

This sequence belongs to the cytochrome c oxidase IV family. As to quaternary structure, component of the cytochrome c oxidase (complex IV, CIV), a multisubunit enzyme composed of 14 subunits. The complex is composed of a catalytic core of 3 subunits MT-CO1, MT-CO2 and MT-CO3, encoded in the mitochondrial DNA, and 11 supernumerary subunits COX4I1 (or COX4I2), COX5A, COX5B, COX6A1 (or COX6A2), COX6B1 (or COX6B2), COX6C, COX7A2 (or COX7A1), COX7B, COX7C, COX8A and NDUFA4, which are encoded in the nuclear genome. The complex exists as a monomer or a dimer and forms supercomplexes (SCs) in the inner mitochondrial membrane with NADH-ubiquinone oxidoreductase (complex I, CI) and ubiquinol-cytochrome c oxidoreductase (cytochrome b-c1 complex, complex III, CIII), resulting in different assemblies (supercomplex SCI(1)III(2)IV(1) and megacomplex MCI(2)III(2)IV(2)). Interacts with AFG1L. Interacts with PHB2; the interaction decreases in absence of SPHK2. Interacts with ABCB7; this interaction allows the regulation of cellular iron homeostasis and cellular reactive oxygen species (ROS) levels in cardiomyocytes. Interacts with FLVCR2; this interaction occurs in the absence of heme and is disrupted upon heme binding. Interacts with IRGC. In terms of tissue distribution, ubiquitous.

It is found in the mitochondrion inner membrane. Its pathway is energy metabolism; oxidative phosphorylation. Its function is as follows. Component of the cytochrome c oxidase, the last enzyme in the mitochondrial electron transport chain which drives oxidative phosphorylation. The respiratory chain contains 3 multisubunit complexes succinate dehydrogenase (complex II, CII), ubiquinol-cytochrome c oxidoreductase (cytochrome b-c1 complex, complex III, CIII) and cytochrome c oxidase (complex IV, CIV), that cooperate to transfer electrons derived from NADH and succinate to molecular oxygen, creating an electrochemical gradient over the inner membrane that drives transmembrane transport and the ATP synthase. Cytochrome c oxidase is the component of the respiratory chain that catalyzes the reduction of oxygen to water. Electrons originating from reduced cytochrome c in the intermembrane space (IMS) are transferred via the dinuclear copper A center (CU(A)) of subunit 2 and heme A of subunit 1 to the active site in subunit 1, a binuclear center (BNC) formed by heme A3 and copper B (CU(B)). The BNC reduces molecular oxygen to 2 water molecules using 4 electrons from cytochrome c in the IMS and 4 protons from the mitochondrial matrix. This Homo sapiens (Human) protein is Cytochrome c oxidase subunit 4 isoform 1, mitochondrial.